Reading from the N-terminus, the 648-residue chain is tRNA 5-methylaminomethyl-2-thiouridine biosynthesis bifunctional protein MnmC (648 aa).

The segment at 1-228 (MTDRLVPASL…VDDLLVGEYA (228 aa)) is tRNA (mnm(5)s(2)U34)-methyltransferase. Positions 252–648 (IGAGLAGCAV…LRARRVGRAG (397 aa)) are FAD-dependent cmnm(5)s(2)U34 oxidoreductase.

It in the N-terminal section; belongs to the methyltransferase superfamily. tRNA (mnm(5)s(2)U34)-methyltransferase family. The protein in the C-terminal section; belongs to the DAO family. The cofactor is FAD.

It localises to the cytoplasm. It carries out the reaction 5-aminomethyl-2-thiouridine(34) in tRNA + S-adenosyl-L-methionine = 5-methylaminomethyl-2-thiouridine(34) in tRNA + S-adenosyl-L-homocysteine + H(+). Catalyzes the last two steps in the biosynthesis of 5-methylaminomethyl-2-thiouridine (mnm(5)s(2)U) at the wobble position (U34) in tRNA. Catalyzes the FAD-dependent demodification of cmnm(5)s(2)U34 to nm(5)s(2)U34, followed by the transfer of a methyl group from S-adenosyl-L-methionine to nm(5)s(2)U34, to form mnm(5)s(2)U34. This is tRNA 5-methylaminomethyl-2-thiouridine biosynthesis bifunctional protein MnmC from Burkholderia lata (strain ATCC 17760 / DSM 23089 / LMG 22485 / NCIMB 9086 / R18194 / 383).